Here is a 177-residue protein sequence, read N- to C-terminus: Large ribosomal subunit protein uL16 (177 aa).

It belongs to the universal ribosomal protein uL16 family.

This chain is Large ribosomal subunit protein uL16, found in Natronomonas pharaonis (strain ATCC 35678 / DSM 2160 / CIP 103997 / JCM 8858 / NBRC 14720 / NCIMB 2260 / Gabara) (Halobacterium pharaonis).